The following is a 360-amino-acid chain: G-protein coupled receptor 15 (360 aa).

The Extracellular segment spans residues 1–33 (MDPEETSVYLDYYYATSPNSDIRETHSHVPYTS). Residues 34-54 (VFLPVFYTAVFLTGVLGNLVL) traverse the membrane as a helical segment. At 55-69 (MGALHFKPGSRRLID) the chain is on the cytoplasmic side. A helical membrane pass occupies residues 70–90 (IFIINLAASDFIFLVTLPLWV). The Extracellular segment spans residues 91-120 (DKEASLGLWRTGSFLCKGSSYMISVNMHCS). The chain crosses the membrane as a helical span at residues 121–141 (VLLLTCMSVDRYLAIVWPVVS). Residues 142 to 149 (RKFRRTDC) lie on the Cytoplasmic side of the membrane. The chain crosses the membrane as a helical span at residues 150–170 (AYVVCASIWFISCLLGLPTLL). Topologically, residues 171-192 (SRELTLIDDKPYCAEKKATPIK) are extracellular. The helical transmembrane segment at 193–213 (LIWSLVALIFTFFVPLLSIVT) threads the bilayer. Residues 214–239 (CYCCIARKLCAHYQQSGKHNKKLKKS) are Cytoplasmic-facing. The chain crosses the membrane as a helical span at residues 240–260 (IKIIFIVVAAFLVSWLPFNTF). At 261–284 (KFLAIVSGLRQEHYLPSAILQLGM) the chain is on the extracellular side. The helical transmembrane segment at 285 to 305 (EVSGPLAFANSCVNPFIYYIF) threads the bilayer. The Cytoplasmic segment spans residues 306-360 (DSYIRRAIVHCLCPCLKNYDFGSSTETSDSHLTKALSTFIHAEDFARRRKRSVSL). Residue S359 is modified to Phosphoserine.

It belongs to the G-protein coupled receptor 1 family. As to quaternary structure, interacts with adapter YWHAE; this interaction promotes ER-to-Golgi transport of GPR15. Interacts with GNAI1; this interaction initiates the signaling pathway. In terms of processing, phosphorylation is necessary for YWHAE binding and efficient surface expression. O-glycosylated. Sialylated O-glycans in the N-terminal tail inhibits binding of GPR15LG. Post-translationally, sulfation is required for efficient binding of GPR15LG. In terms of tissue distribution, highly expressed in lymphoid tissues, including macrophages and peripheral blood mononuclear cells.

The protein resides in the cell membrane. Its function is as follows. G protein-coupled receptor that plays an important role in immune homeostasis. Acts via its natural ligand GPR15LG, a chemokine-like polypeptide strongly expressed in gastrointestinal tissues. GPR15-GPR15LG signaling axis regulates intestinal homeostasis and inflammation through the migration of immune cells. Controls thereby the specific homing of T-cells, particularly FOXP3+ regulatory T-cells (Tregs), to the large intestine lamina propria. Also required for skin localization of thymus-derived dendritic epidermal T-cells. Plays an important role in mediating cytoprotective function as well as angiogenesis of thrombomodulin. Mechanistically, preferentially signals through the Gi/o pathway to inhibit adenylate cyclase activity and activate a phosphatidylinositol-calcium second messenger system that regulates the release of Ca(2+) ions from intracellular stores. Functionally, (Microbial infection) Acts as an alternative coreceptor with CD4 for HIV-1 infection. In Homo sapiens (Human), this protein is G-protein coupled receptor 15 (GPR15).